A 457-amino-acid chain; its full sequence is 11S globulin seed storage protein Ana o 2.0101 (457 aa).

The N-terminal stretch at 1 to 14 (LSVCFLILFHGCLA) is a signal peptide. The segment at 15-29 (SRQEWQQQDECQIDR) is igE-binding. 2 disulfides stabilise this stretch: Cys25–Cys58 and Cys101–Cys278. Conformational epitope; mouse monoclonal antibody (mAb) 2B5-binding stretches follow at residues 29–37 (RLDALEPDN) and 31–48 (DALE…TVEA). The Cupin type-1 1 domain occupies 30–220 (LDALEPDNRV…AFQVDERLIK (191 aa)). Binds goat polyclonal antibodies (pAbs) stretches follow at residues 32–45 (ALEP…EAGT) and 55–86 (QFRC…QLIY). The interval 34-57 (EPDNRVEYEAGTVEAWDPNHEQFR) is mouse monoclonal antibody (mAb) 2B5-binding. The segment at 41-55 (YEAGTVEAWDPNHEQ) is mouse monoclonal antibody (mAb) 4H9-binding. The interval 105–119 (YQAPQQGRQQGQSGR) is igE-binding. The binds goat polyclonal antibodies (pAbs) stretch occupies residues 215–239 (DERLIKQLKSEDNRGGIVKVKDDEL). Residues 233 to 252 (KVKDDELRVIRPSRSQSERG) are CD4(+) T cell-reactive epitope. The interval 243 to 270 (RPSRSQSERGSESEEESEDEKRRWGQRD) is disordered. Residues 261-270 (DEKRRWGQRD) are compositionally biased toward basic and acidic residues. The interval 265–289 (RWGQRDNGIEETICTMRLKENINDP) is linear epitope; mouse monoclonal antibody (mAb) 1F5-binding. The short motif at 271–276 (NGIEET) is the NGXEET; peptidase recognition motif element. Positions 284 to 433 (ENINDPARAD…AFQISREDAR (150 aa)) constitute a Cupin type-1 2 domain. 5 CD4(+) T cell-reactive epitope regions span residues 289–308 (PARA…LNSL), 297–316 (PEVG…LKWL), 321–340 (EKGV…LNSH), 329–348 (ALVL…GCKG), and 377–396 (QNFA…ISFK). A binds goat polyclonal antibodies (pAbs), but buried in the 3D-structure model region spans residues 395-416 (FKTNDRAMTSPLAGRTSVLGGM).

It belongs to the 11S seed storage protein (globulins) family. Homotrimer. Hexamer. Each subunit is composed of an acidic and a basic chain derived from a single precursor and linked by a disulfide bond. In terms of processing, proteolytically processed from a single precursor to produce an acidic and a basic chain that are linked by a disulfide bond. Not glycosylated. In terms of tissue distribution, expressed in seed (at protein level). Expressed in the juice of the cashew apple (at protein level).

In terms of biological role, seed storage protein. The sequence is that of 11S globulin seed storage protein Ana o 2.0101 from Anacardium occidentale (Cashew).